Here is a 1691-residue protein sequence, read N- to C-terminus: Collagen alpha-6(IV) chain (1691 aa).

The signal sequence occupies residues Met-1–Ala-22. The tract at residues Gly-23 to Lys-46 is 7S domain. Residues Gly-47–Ser-1463 form a triple-helical region region. Disordered stretches follow at residues Ile-108–Lys-338, Gly-404–Lys-473, Gly-486–Pro-881, Gly-915–Asp-1099, and Thr-1185–Met-1459. Asn-127 carries N-linked (GlcNAc...) asparagine glycosylation. Positions Pro-185–Pro-197 are enriched in low complexity. A compositionally biased stretch (pro residues) spans Ala-198–Leu-213. 2 stretches are compositionally biased toward low complexity: residues Gln-311 to Lys-320 and Gly-421 to Leu-431. Composition is skewed to pro residues over residues Pro-432–Pro-443 and Thr-491–Pro-502. The span at Trp-503–Lys-512 shows a compositional bias: low complexity. The Cell attachment site motif lies at Arg-515–Asp-517. Residues Pro-526–Pro-541 show a composition bias toward low complexity. The Cell attachment site signature appears at Arg-560–Asp-562. Residues Gly-588–Gly-599 show a composition bias toward gly residues. Low complexity-rich tracts occupy residues Leu-641–Gly-652, Pro-660–Gly-703, Leu-722–Pro-735, and Ser-802–Pro-820. Over residues Pro-842–Lys-851 the composition is skewed to basic residues. The segment covering Pro-853–Lys-878 has biased composition (low complexity). The Cell attachment site signature appears at Arg-986–Asp-988. Positions Ser-1055–Lys-1068 are enriched in low complexity. Over residues Gly-1210–Gly-1220 the composition is skewed to gly residues. The segment covering Pro-1234–Leu-1253 has biased composition (low complexity). The segment covering Pro-1275–Pro-1284 has biased composition (pro residues). Residues Ser-1360–Thr-1371 show a composition bias toward polar residues. 2 stretches are compositionally biased toward low complexity: residues Leu-1384–Pro-1397 and Ala-1429–Met-1459. Positions Gly-1467–Leu-1691 constitute a Collagen IV NC1 domain. 6 disulfides stabilise this stretch: Cys-1482/Cys-1571, Cys-1515/Cys-1568, Cys-1527/Cys-1533, Cys-1590/Cys-1687, Cys-1624/Cys-1684, and Cys-1636/Cys-1643.

The protein belongs to the type IV collagen family. In terms of assembly, there are six type IV collagen isoforms, alpha 1(IV)-alpha 6(IV), each of which can form a triple helix structure with 2 other chains to generate type IV collagen network. Prolines at the third position of the tripeptide repeating unit (G-X-Y) are hydroxylated in some or all of the chains. Post-translationally, type IV collagens contain numerous cysteine residues which are involved in inter- and intramolecular disulfide bonding. 12 of these, located in the NC1 domain, are conserved in all known type IV collagens. In terms of processing, the trimeric structure of the NC1 domains is stabilized by covalent bonds between Lys and Met residues.

It localises to the secreted. It is found in the extracellular space. The protein resides in the extracellular matrix. The protein localises to the basement membrane. Functionally, type IV collagen is the major structural component of glomerular basement membranes (GBM), forming a 'chicken-wire' meshwork together with laminins, proteoglycans and entactin/nidogen. The sequence is that of Collagen alpha-6(IV) chain (COL4A6) from Homo sapiens (Human).